The following is a 241-amino-acid chain: Zinc finger CCHC domain-containing protein 24 (241 aa).

A phosphoserine mark is found at S65 and S93. The segment at 132–149 (YLCHLCFNKGHYIKDCPQ) adopts a CCHC-type zinc-finger fold.

The sequence is that of Zinc finger CCHC domain-containing protein 24 (ZCCHC24) from Homo sapiens (Human).